Reading from the N-terminus, the 587-residue chain is Solute carrier family 13 member 2 (587 aa).

4 consecutive transmembrane segments (helical) span residues 13–33 (FYLI…IVQT), 53–73 (ALPL…MGIM), 86–106 (TNIL…WNLH), and 136–156 (SMWI…HAVL). The disordered stretch occupies residues 188-208 (KLDNGQPVSAPSEPRTQKTQE). 8 consecutive transmembrane segments (helical) span residues 264–284 (FAFP…QVLF), 329–349 (VLFV…FPGW), 367–387 (TVAI…PGLM), 407–427 (TVND…FALA), 445–465 (PLQH…IAIF), 477–497 (LFLP…LYVM), 506–526 (LAFM…FGGL), and 535–555 (GFLL…SWSI).

It belongs to the SLC13A/DASS transporter (TC 2.A.47) family. NADC subfamily. As to expression, expressed in large and small intestine and in the kidney proximal tubules.

The protein localises to the apical cell membrane. It catalyses the reaction succinate(out) + 3 Na(+)(out) = succinate(in) + 3 Na(+)(in). The enzyme catalyses fumarate(out) + 3 Na(+)(out) = fumarate(in) + 3 Na(+)(in). The catalysed reaction is 2-oxoglutarate(out) + 3 Na(+)(out) = 2-oxoglutarate(in) + 3 Na(+)(in). Li(+) decreases succinate transport in the presence of Na(+), by competing at one of the three cation binding sites. Functionally, low-affinity sodium-dicarboxylate cotransporter, that mediates the entry of citric acid cycle intermediates, such as succinate, citrate, fumarate and alpha-ketoglutarate (2-oxoglutarate) into the small intestine and renal proximal tubule. Transports the dicarboxylate into the cell with a probable stoichiometry of 3 Na(+) for 1 divalent dicarboxylate, rendering the process electrogenic. Citrate is transported in protonated form as a divalent anion, rather than the trivalent form which is normally found in blood. Has a critical role in renal dicarboxylate transport. This is Solute carrier family 13 member 2 (Slc13a2) from Rattus norvegicus (Rat).